A 221-amino-acid polypeptide reads, in one-letter code: MERNTCMILALDVTDREEALKIAEDVWEFVDAIKVGYPLILATGLGIIRELAEFAPVIADFKVADIPNTNRLICDQVFEAGADAVIAQGFTGRDSLDACIEIASEYRKDVFVVSEMSHPGGADFMQPVAEAIAKMALEAGAFGLVAPATRPKRVKKIRRIIGDKLTIISPGVGAQGGKASDVIAAGADWVIVGRSIYKAESPKEAARQIAEEIQAELRGEY.

Substrate-binding positions include Asp-12, Lys-34, 60–69 (DFKVADIPNT), Ser-117, 170–180 (PGVGAQGGKAS), Gly-193, and Arg-194. Lys-62 functions as the Proton donor in the catalytic mechanism.

It belongs to the OMP decarboxylase family. Type 1 subfamily. Homodimer.

The catalysed reaction is orotidine 5'-phosphate + H(+) = UMP + CO2. It participates in pyrimidine metabolism; UMP biosynthesis via de novo pathway; UMP from orotate: step 2/2. In terms of biological role, catalyzes the decarboxylation of orotidine 5'-monophosphate (OMP) to uridine 5'-monophosphate (UMP). This chain is Orotidine 5'-phosphate decarboxylase, found in Methanosarcina acetivorans (strain ATCC 35395 / DSM 2834 / JCM 12185 / C2A).